A 440-amino-acid chain; its full sequence is Xylose isomerase (440 aa).

Active-site residues include H101 and D104. Mg(2+)-binding residues include E232, E268, H271, D296, D307, D309, and D339.

Belongs to the xylose isomerase family. In terms of assembly, homotetramer. It depends on Mg(2+) as a cofactor.

The protein resides in the cytoplasm. It catalyses the reaction alpha-D-xylose = alpha-D-xylulofuranose. This chain is Xylose isomerase, found in Cronobacter sakazakii (strain ATCC BAA-894) (Enterobacter sakazakii).